The primary structure comprises 266 residues: bZIP transcription factor 12 (266 aa).

A bZIP domain is found at 184-248 (AMQRQKRMIK…KELKEMVVPV (65 aa)). Residues 187–205 (RQKRMIKNRESAARSRERK) form a basic motif region. Positions 202 to 244 (RERKQAYIAELESLVTQLEEENAKMFKEQEEQHQKRLKELKEM) form a coiled coil. The tract at residues 212–219 (LESLVTQL) is leucine-zipper.

Its subcellular location is the nucleus. Functionally, transcription activator that binds to the ABA-responsive elements (ABREs) in vitro. Involved in abiotic stress responses and abscisic acid (ABA) signaling. Involved in the signaling pathway that induces growth inhibition in response to D-allose. In Oryza sativa subsp. japonica (Rice), this protein is bZIP transcription factor 12.